The sequence spans 277 residues: Caspase-3 (277 aa).

Met-1 carries the N-acetylmethionine modification. 2 consecutive propeptides follow at residues 1–9 and 10–28; these read MENTENSVD and SKSIKSLEPKIIHGSKSVD. Lys-11 is subject to N6-acetyllysine. Position 26 is a phosphoserine (Ser-26). Active-site residues include His-121 and Cys-163. Cys-163 carries the post-translational modification S-nitrosocysteine; in inhibited form.

Belongs to the peptidase C14A family. In terms of assembly, heterotetramer that consists of two anti-parallel arranged heterodimers, each one formed by a 17 kDa (p17) and a 12 kDa (p12) subunit. Interacts with BIRC6/bruce. In terms of processing, cleavage by granzyme B, caspase-6, caspase-8 and caspase-10 generates the two active subunits. Additional processing of the propeptides is likely due to the autocatalytic activity of the activated protease. Active heterodimers between the small subunit of caspase-7 protease and the large subunit of caspase-3 also occur and vice versa. Post-translationally, S-nitrosylated on its catalytic site cysteine in unstimulated cell lines and denitrosylated upon activation of the Fas apoptotic pathway, associated with an increase in intracellular caspase activity. Fas therefore activates caspase-3 not only by inducing the cleavage of the caspase zymogen to its active subunits, but also by stimulating the denitrosylation of its active site thiol. Ubiquitinated by BIRC6; this activity is inhibited by DIABLO/SMAC.

It is found in the cytoplasm. The enzyme catalyses Strict requirement for an Asp residue at positions P1 and P4. It has a preferred cleavage sequence of Asp-Xaa-Xaa-Asp-|- with a hydrophobic amino-acid residue at P2 and a hydrophilic amino-acid residue at P3, although Val or Ala are also accepted at this position.. Inhibited by BIRC6; following inhibition of BIRC6-caspase binding by DIABLO/SMAC, BIRC6 is subjected to caspase cleavage, leading to an increase in active caspases. Its function is as follows. Involved in the activation cascade of caspases responsible for apoptosis execution. At the onset of apoptosis, it proteolytically cleaves poly(ADP-ribose) polymerase PARP1 at a '216-Asp-|-Gly-217' bond. Cleaves and activates sterol regulatory element binding proteins (SREBPs) between the basic helix-loop-helix leucine zipper domain and the membrane attachment domain. Cleaves and activates caspase-6, -7 and -9 (CASP6, CASP7 and CASP9, respectively). Cleaves and inactivates interleukin-18 (IL18). Triggers cell adhesion in sympathetic neurons through RET cleavage. Cleaves IL-1 beta between an Asp and an Ala, releasing the mature cytokine which is involved in a variety of inflammatory processes. Cleaves and inhibits serine/threonine-protein kinase AKT1 in response to oxidative stress. Acts as an inhibitor of type I interferon production during virus-induced apoptosis by mediating cleavage of antiviral proteins CGAS, IRF3 and MAVS, thereby preventing cytokine overproduction. Also involved in pyroptosis by mediating cleavage and activation of gasdermin-E (GSDME). Cleaves XRCC4 and phospholipid scramblase proteins XKR4, XKR8 and XKR9, leading to promote phosphatidylserine exposure on apoptotic cell surface. Cleaves BIRC6 following inhibition of BIRC6-caspase binding by DIABLO/SMAC. The sequence is that of Caspase-3 (CASP3) from Macaca fascicularis (Crab-eating macaque).